The chain runs to 130 residues: Small ribosomal subunit protein uS9 (130 aa).

It belongs to the universal ribosomal protein uS9 family.

The sequence is that of Small ribosomal subunit protein uS9 from Pasteurella multocida (strain Pm70).